A 190-amino-acid chain; its full sequence is Threonylcarbamoyl-AMP synthase (190 aa).

In terms of domain architecture, YrdC-like spans 7–190 (SQDVASLVIA…ALSGELIRQG (184 aa)).

The protein belongs to the SUA5 family. TsaC subfamily.

Its subcellular location is the cytoplasm. The enzyme catalyses L-threonine + hydrogencarbonate + ATP = L-threonylcarbamoyladenylate + diphosphate + H2O. Required for the formation of a threonylcarbamoyl group on adenosine at position 37 (t(6)A37) in tRNAs that read codons beginning with adenine. Catalyzes the conversion of L-threonine, HCO(3)(-)/CO(2) and ATP to give threonylcarbamoyl-AMP (TC-AMP) as the acyladenylate intermediate, with the release of diphosphate. The protein is Threonylcarbamoyl-AMP synthase of Sodalis glossinidius (strain morsitans).